A 156-amino-acid polypeptide reads, in one-letter code: 6,7-dimethyl-8-ribityllumazine synthase (156 aa).

5-amino-6-(D-ribitylamino)uracil-binding positions include Phe-23, 57–59, and 81–83; these read AFE and TVI. 86–87 contributes to the (2S)-2-hydroxy-3-oxobutyl phosphate binding site; sequence ST. Residue His-89 is the Proton donor of the active site. Phe-114 serves as a coordination point for 5-amino-6-(D-ribitylamino)uracil. Arg-128 contacts (2S)-2-hydroxy-3-oxobutyl phosphate.

Belongs to the DMRL synthase family. As to quaternary structure, forms an icosahedral capsid composed of 60 subunits, arranged as a dodecamer of pentamers.

The catalysed reaction is (2S)-2-hydroxy-3-oxobutyl phosphate + 5-amino-6-(D-ribitylamino)uracil = 6,7-dimethyl-8-(1-D-ribityl)lumazine + phosphate + 2 H2O + H(+). The protein operates within cofactor biosynthesis; riboflavin biosynthesis; riboflavin from 2-hydroxy-3-oxobutyl phosphate and 5-amino-6-(D-ribitylamino)uracil: step 1/2. Catalyzes the formation of 6,7-dimethyl-8-ribityllumazine by condensation of 5-amino-6-(D-ribitylamino)uracil with 3,4-dihydroxy-2-butanone 4-phosphate. This is the penultimate step in the biosynthesis of riboflavin. This chain is 6,7-dimethyl-8-ribityllumazine synthase, found in Shouchella clausii (strain KSM-K16) (Alkalihalobacillus clausii).